We begin with the raw amino-acid sequence, 692 residues long: Elongation factor G (692 aa).

The 276-residue stretch at 8–283 (DRYRNIGIMA…AVVDFLPSPL (276 aa)) folds into the tr-type G domain. GTP-binding positions include 17–24 (AHIDAGKT), 81–85 (DTPGH), and 135–138 (NKMD).

The protein belongs to the TRAFAC class translation factor GTPase superfamily. Classic translation factor GTPase family. EF-G/EF-2 subfamily.

Its subcellular location is the cytoplasm. Functionally, catalyzes the GTP-dependent ribosomal translocation step during translation elongation. During this step, the ribosome changes from the pre-translocational (PRE) to the post-translocational (POST) state as the newly formed A-site-bound peptidyl-tRNA and P-site-bound deacylated tRNA move to the P and E sites, respectively. Catalyzes the coordinated movement of the two tRNA molecules, the mRNA and conformational changes in the ribosome. The chain is Elongation factor G from Rhodospirillum rubrum (strain ATCC 11170 / ATH 1.1.1 / DSM 467 / LMG 4362 / NCIMB 8255 / S1).